Consider the following 538-residue polypeptide: Zinc finger protein with KRAB and SCAN domains 3 (538 aa).

Ser42 is modified (phosphoserine). An SCAN box domain is found at 46-128 (RERFRGFRYP…VLLEYLERQL (83 aa)). Lys171 is covalently cross-linked (Glycyl lysine isopeptide (Lys-Gly) (interchain with G-Cter in SUMO2)). Phosphothreonine is present on Thr207. In terms of domain architecture, KRAB spans 214 to 274 (LKVEDVALTL…PAEELPEKEH (61 aa)). Residues 226 to 236 (EWTQQDSSQGN) show a composition bias toward polar residues. The disordered stretch occupies residues 226–274 (EWTQQDSSQGNLCRDEKQENHGSLVSLGDEKQTKSRDLPPAEELPEKEH). A compositionally biased stretch (basic and acidic residues) spans 253 to 274 (GDEKQTKSRDLPPAEELPEKEH). 5 C2H2-type zinc fingers span residues 314 to 336 (HICH…RRIH), 342 to 364 (YECE…QRVH), 370 to 392 (YECE…QRTH), 398 to 420 (YECD…HRIH), and 426 to 448 (YQCS…QRIH). Position 449 is a phosphothreonine (Thr449). C2H2-type zinc fingers lie at residues 480–502 (YKCN…QKIH) and 508–530 (YQCN…QRSH).

Belongs to the krueppel C2H2-type zinc-finger protein family.

It is found in the nucleus. The protein resides in the cytoplasm. Transcriptional factor that binds to the consensus sequence 5'-[GT][AG][AGT]GGGG-3' and acts as a repressor of autophagy. Specifically represses expression of genes involved in autophagy and lysosome biogenesis/function such as MAP1LC3B, ULK1 or WIPI2. Associates with chromatin at the ITGB4 and VEGF promoters. Also acts as a transcription activator and promotes cancer cell progression and/or migration in various tumors and myelomas. The sequence is that of Zinc finger protein with KRAB and SCAN domains 3 (ZKSCAN3) from Homo sapiens (Human).